Here is a 269-residue protein sequence, read N- to C-terminus: Shikimate dehydrogenase (NADP(+)) (269 aa).

Shikimate contacts are provided by residues 13-15 and threonine 60; that span reads SLS. Lysine 64 (proton acceptor) is an active-site residue. Position 76 (glutamate 76) interacts with NADP(+). Asparagine 85 and aspartate 100 together coordinate shikimate. NADP(+) contacts are provided by residues 124 to 128, 148 to 153, and isoleucine 209; these read GAGGA and NRTMSR. Tyrosine 211 is a binding site for shikimate. Glycine 232 serves as a coordination point for NADP(+). Glutamine 239 is a binding site for shikimate.

This sequence belongs to the shikimate dehydrogenase family. In terms of assembly, monomer or homodimer.

It carries out the reaction shikimate + NADP(+) = 3-dehydroshikimate + NADPH + H(+). Its pathway is metabolic intermediate biosynthesis; chorismate biosynthesis; chorismate from D-erythrose 4-phosphate and phosphoenolpyruvate: step 4/7. Functionally, involved in the biosynthesis of the chorismate, which leads to the biosynthesis of aromatic amino acids. Catalyzes the reversible NADPH linked reduction of 3-dehydroshikimate (DHSA) to yield shikimate (SA). It can also use NAD to oxidize shikimate. This Staphylococcus epidermidis (strain ATCC 35984 / DSM 28319 / BCRC 17069 / CCUG 31568 / BM 3577 / RP62A) protein is Shikimate dehydrogenase (NADP(+)).